We begin with the raw amino-acid sequence, 388 residues long: S-adenosylmethionine synthase (388 aa).

His16 is an ATP binding site. Asp18 contacts Mg(2+). Glu44 serves as a coordination point for K(+). 2 residues coordinate L-methionine: Glu57 and Gln100. A flexible loop region spans residues Gln100 to Lys110. Residues Asp167–Lys169, Arg233–Phe234, Asp242, Arg248–Lys249, Ala265, and Lys269 contribute to the ATP site. Asp242 serves as a coordination point for L-methionine. Lys273 provides a ligand contact to L-methionine.

Belongs to the AdoMet synthase family. As to quaternary structure, homotetramer; dimer of dimers. Mg(2+) is required as a cofactor. It depends on K(+) as a cofactor.

The protein localises to the cytoplasm. It catalyses the reaction L-methionine + ATP + H2O = S-adenosyl-L-methionine + phosphate + diphosphate. It functions in the pathway amino-acid biosynthesis; S-adenosyl-L-methionine biosynthesis; S-adenosyl-L-methionine from L-methionine: step 1/1. In terms of biological role, catalyzes the formation of S-adenosylmethionine (AdoMet) from methionine and ATP. The overall synthetic reaction is composed of two sequential steps, AdoMet formation and the subsequent tripolyphosphate hydrolysis which occurs prior to release of AdoMet from the enzyme. The chain is S-adenosylmethionine synthase from Polynucleobacter necessarius subsp. necessarius (strain STIR1).